Here is a 137-residue protein sequence, read N- to C-terminus: Basic phospholipase A2 beta-bungarotoxin A1 chain (137 aa).

The signal sequence occupies residues 1–9; the sequence is AVCVSLLGA. Positions 10–17 are excised as a propeptide; that stretch reads ANIPPHPL. Cystine bridges form between Cys44–Cys136, Cys46–Cys62, Cys61–Cys117, Cys68–Cys110, Cys78–Cys103, and Cys96–Cys108. The Ca(2+) site is built by Tyr45, Gly47, and Gly49. His65 is a catalytic residue. Asp66 is a Ca(2+) binding site. Residue Asp111 is part of the active site.

This sequence belongs to the phospholipase A2 family. Group I subfamily. D49 sub-subfamily. In terms of assembly, heterodimer; disulfide-linked. The A chain has phospholipase A2 activity and the B chain shows homology with the basic protease inhibitors. Requires Ca(2+) as cofactor. As to expression, expressed by the venom gland.

It localises to the secreted. The enzyme catalyses a 1,2-diacyl-sn-glycero-3-phosphocholine + H2O = a 1-acyl-sn-glycero-3-phosphocholine + a fatty acid + H(+). In terms of biological role, snake venom phospholipase A2 (PLA2) that shows presynaptic neurotoxicity. The A chain has phospholipase activity. PLA2 catalyzes the calcium-dependent hydrolysis of the 2-acyl groups in 3-sn-phosphoglycerides. This Bungarus candidus (Malayan krait) protein is Basic phospholipase A2 beta-bungarotoxin A1 chain.